The following is a 492-amino-acid chain: GTPase Der (492 aa).

2 EngA-type G domains span residues 3 to 166 (PVVA…VDEV) and 205 to 378 (IKLA…DSAT). GTP contacts are provided by residues 9–16 (GRPNVGKS), 56–60 (DTGGI), 118–121 (NKTD), 211–218 (GRPNVGKS), 258–262 (DTAGV), and 323–326 (NKWD). The KH-like domain maps to 379–463 (RRVSTAMLTR…PIRIQFKEGE (85 aa)).

The protein belongs to the TRAFAC class TrmE-Era-EngA-EngB-Septin-like GTPase superfamily. EngA (Der) GTPase family. In terms of assembly, associates with the 50S ribosomal subunit.

Its function is as follows. GTPase that plays an essential role in the late steps of ribosome biogenesis. In Klebsiella pneumoniae subsp. pneumoniae (strain ATCC 700721 / MGH 78578), this protein is GTPase Der.